Consider the following 116-residue polypeptide: MKVKIDYDYENDNLLVYKEGAKSKKTLDLDDILIDFDENGDVVGIEILNASKLFNVDKYDLLKNLIKFEAVGKITKDLITLNIKLYLLRRKKEIIKESVVKGLNTIGLKEGEVVIG.

This is an uncharacterized protein from Methanocaldococcus jannaschii (strain ATCC 43067 / DSM 2661 / JAL-1 / JCM 10045 / NBRC 100440) (Methanococcus jannaschii).